The following is a 437-amino-acid chain: Bifunctional protein GlmU (437 aa).

Residues 1–223 (MHNTAVILAA…WDECRGVNSR (223 aa)) are pyrophosphorylase. UDP-N-acetyl-alpha-D-glucosamine contacts are provided by residues 8–11 (LAAG), Lys-22, Gln-70, 75–76 (GT), 96–98 (YGD), Gly-135, Glu-149, Asn-164, and Asn-221. Asp-98 is a binding site for Mg(2+). Mg(2+) is bound at residue Asn-221. Residues 224-244 (AELAAAEAAMQSRLRAAALAA) form a linker region. The tract at residues 245–437 (GVTMTAPETV…AELRMTKGKR (193 aa)) is N-acetyltransferase. UDP-N-acetyl-alpha-D-glucosamine is bound by residues Arg-310 and Lys-328. His-340 (proton acceptor) is an active-site residue. Residues Tyr-343 and Asn-354 each coordinate UDP-N-acetyl-alpha-D-glucosamine. Residues Ala-357, 363–364 (NY), Ser-382, Ala-400, and Arg-417 contribute to the acetyl-CoA site.

It in the N-terminal section; belongs to the N-acetylglucosamine-1-phosphate uridyltransferase family. In the C-terminal section; belongs to the transferase hexapeptide repeat family. In terms of assembly, homotrimer. The cofactor is Mg(2+).

It localises to the cytoplasm. The enzyme catalyses alpha-D-glucosamine 1-phosphate + acetyl-CoA = N-acetyl-alpha-D-glucosamine 1-phosphate + CoA + H(+). It carries out the reaction N-acetyl-alpha-D-glucosamine 1-phosphate + UTP + H(+) = UDP-N-acetyl-alpha-D-glucosamine + diphosphate. Its pathway is nucleotide-sugar biosynthesis; UDP-N-acetyl-alpha-D-glucosamine biosynthesis; N-acetyl-alpha-D-glucosamine 1-phosphate from alpha-D-glucosamine 6-phosphate (route II): step 2/2. It functions in the pathway nucleotide-sugar biosynthesis; UDP-N-acetyl-alpha-D-glucosamine biosynthesis; UDP-N-acetyl-alpha-D-glucosamine from N-acetyl-alpha-D-glucosamine 1-phosphate: step 1/1. The protein operates within bacterial outer membrane biogenesis; LPS lipid A biosynthesis. Catalyzes the last two sequential reactions in the de novo biosynthetic pathway for UDP-N-acetylglucosamine (UDP-GlcNAc). The C-terminal domain catalyzes the transfer of acetyl group from acetyl coenzyme A to glucosamine-1-phosphate (GlcN-1-P) to produce N-acetylglucosamine-1-phosphate (GlcNAc-1-P), which is converted into UDP-GlcNAc by the transfer of uridine 5-monophosphate (from uridine 5-triphosphate), a reaction catalyzed by the N-terminal domain. This Acidiphilium cryptum (strain JF-5) protein is Bifunctional protein GlmU.